The following is a 150-amino-acid chain: MKVIFLEDVKGKGKRGEVKNVSDGYAQNFLIKNGKAKAATSAAVSELKGQKKAEAKHEAEILADAEKLKTVLENDKTVVEIKAKAGKDGRLFGSIPNKQIATALEKQYKIKIDKRKIELSNPIRSMGYTNVPVKLHQKVTATIRVHVAEQ.

It belongs to the bacterial ribosomal protein bL9 family.

In terms of biological role, binds to the 23S rRNA. The chain is Large ribosomal subunit protein bL9 from Pediococcus pentosaceus (strain ATCC 25745 / CCUG 21536 / LMG 10740 / 183-1w).